Here is a 181-residue protein sequence, read N- to C-terminus: Endoribonuclease YbeY (181 aa).

H115, H119, and H125 together coordinate Zn(2+).

It belongs to the endoribonuclease YbeY family. It depends on Zn(2+) as a cofactor.

The protein resides in the cytoplasm. Functionally, single strand-specific metallo-endoribonuclease involved in late-stage 70S ribosome quality control and in maturation of the 3' terminus of the 16S rRNA. The protein is Endoribonuclease YbeY of Bifidobacterium animalis subsp. lactis (strain AD011).